The chain runs to 393 residues: MGYYALTETTAIQYAKEHGYFEKKANVFCHEIGDGNLNYVFKLDDGEKSIIIKQALPYAKVVGESWPLSIKRATIESKALKIFAKYVPDYVPVVHSHDEELAVTVIEDLSRLTITRKGLIDGEEYPLLSQHIGRFLANVLFYTSDFGLQSEEKRGLEGTFVNPDLCKITEDLVFTDPFGHYDTNDYEPELQLAVDELWSDKTLKLKVAQYKYKFLTRKEALIHGDLHTGSIFSSPSETKVIDPEFATYGPFGFDLGQFIANLLLNALSREEEQRSVLFFHIEKTWSYFVDTFTKLWIGEGVEAYTKEKQWLPIILQNIFTDVVGFAGCELIRRTIGLAHVADLDEIANKEKRIQAKKQALYLGKELIKYESKNADIQLFRTLFQQTVSGGVKA.

ATP is bound by residues Asn38, Lys53, and 107–109 (EDL). Asp225 is a substrate binding site. ATP is bound at residue 242-244 (DPE). Substrate is bound at residue Arg332.

It belongs to the methylthioribose kinase family. As to quaternary structure, homodimer.

The catalysed reaction is 5-(methylsulfanyl)-D-ribose + ATP = 5-(methylsulfanyl)-alpha-D-ribose 1-phosphate + ADP + H(+). Its pathway is amino-acid biosynthesis; L-methionine biosynthesis via salvage pathway; S-methyl-5-thio-alpha-D-ribose 1-phosphate from S-methyl-5'-thioadenosine (hydrolase route): step 2/2. Functionally, catalyzes the phosphorylation of methylthioribose into methylthioribose-1-phosphate. The polypeptide is Methylthioribose kinase (Bacillus cereus (strain ATCC 10987 / NRS 248)).